The primary structure comprises 88 residues: Long neurotoxin 31 (88 aa).

An N-terminal signal peptide occupies residues 1–21; it reads MKTLLLTLVVVTIVCLDLGNS. 5 cysteine pairs are disulfide-bonded: cysteine 24-cysteine 42, cysteine 35-cysteine 63, cysteine 48-cysteine 52, cysteine 67-cysteine 78, and cysteine 79-cysteine 84.

The protein belongs to the three-finger toxin family. Long-chain subfamily. Type II alpha-neurotoxin sub-subfamily. In terms of tissue distribution, expressed by the venom gland.

It is found in the secreted. Functionally, binds with high affinity to muscular (alpha-1/CHRNA1) and neuronal (alpha-7/CHRNA7) nicotinic acetylcholine receptor (nAChR) and inhibits acetylcholine from binding to the receptor, thereby impairing neuromuscular and neuronal transmission. This chain is Long neurotoxin 31, found in Drysdalia coronoides (White-lipped snake).